The sequence spans 424 residues: Putative ankyrin repeat protein R858 (424 aa).

4 ANK repeats span residues 115–144 (HLMC…FTKR), 147–177 (TDHT…SDYF), 184–215 (INDS…SINY), and 219–252 (TGST…DIHE).

The chain is Putative ankyrin repeat protein R858 from Acanthamoeba polyphaga (Amoeba).